A 736-amino-acid chain; its full sequence is 1,4-alpha-glucan branching enzyme GlgB (736 aa).

Catalysis depends on aspartate 415, which acts as the Nucleophile. The active-site Proton donor is glutamate 470.

It belongs to the glycosyl hydrolase 13 family. GlgB subfamily. Monomer.

The enzyme catalyses Transfers a segment of a (1-&gt;4)-alpha-D-glucan chain to a primary hydroxy group in a similar glucan chain.. Its pathway is glycan biosynthesis; glycogen biosynthesis. Functionally, catalyzes the formation of the alpha-1,6-glucosidic linkages in glycogen by scission of a 1,4-alpha-linked oligosaccharide from growing alpha-1,4-glucan chains and the subsequent attachment of the oligosaccharide to the alpha-1,6 position. The chain is 1,4-alpha-glucan branching enzyme GlgB from Burkholderia orbicola (strain AU 1054).